The primary structure comprises 279 residues: Large ribosomal subunit protein uL2 (279 aa).

The tract at residues 222–279 is disordered; sequence GMAMNPVDHPMGGGEGKSKSGGGRRHPKSPWGQLAKGLKTRNKKKASQKLIVRGRNAK. A compositionally biased stretch (gly residues) spans 232 to 242; that stretch reads MGGGEGKSKSG. A compositionally biased stretch (basic residues) spans 259 to 268; sequence LKTRNKKKAS.

Belongs to the universal ribosomal protein uL2 family. Part of the 50S ribosomal subunit. Forms a bridge to the 30S subunit in the 70S ribosome.

Functionally, one of the primary rRNA binding proteins. Required for association of the 30S and 50S subunits to form the 70S ribosome, for tRNA binding and peptide bond formation. It has been suggested to have peptidyltransferase activity; this is somewhat controversial. Makes several contacts with the 16S rRNA in the 70S ribosome. This Chlorobium phaeobacteroides (strain DSM 266 / SMG 266 / 2430) protein is Large ribosomal subunit protein uL2.